Reading from the N-terminus, the 209-residue chain is uncharacterized protein (209 aa).

2 disordered regions span residues 1–80 (MFVR…PPVE) and 164–197 (LPAG…PGME). Positions 178–189 (SRGSSRSSCSQR) are enriched in low complexity.

This is an uncharacterized protein from Homo sapiens (Human).